A 295-amino-acid polypeptide reads, in one-letter code: MTEVEKIYEFKEELGRGAFSIVYLGENKQTKQRYAIKVINKSELGKDYEKNLKMEVDILKKVNHPNIIALKELFDTPEKLYLVMELVTGGELFDKIVEKGSYSEADAANLVKKIVSAVGYLHGLNIVHRDLKPENLLLKSKENHLEVAIADFGLSKIIGQTLVMQTACGTPSYVAPEVLNATGYDKEVDMWSIGVITYILLCGFPPFYGDTVPEIFEQIMEANYEFPEEYWGGISKEAKDFIGKLLVVDVSKRLNATNALNHPWLKSNNSNNTIDTVKMKEYIVERQKTQTKLVN.

The region spanning 8-265 (YEFKEELGRG…ATNALNHPWL (258 aa)) is the Protein kinase domain. Residues 14-22 (LGRGAFSIV) and Lys-37 each bind ATP. Asp-130 serves as the catalytic Proton acceptor. Phosphothreonine occurs at positions 166 and 289. The interval 264–295 (WLKSNNSNNTIDTVKMKEYIVERQKTQTKLVN) is autoinhibitory domain.

Belongs to the protein kinase superfamily. CAMK Ser/Thr protein kinase family. CaMK subfamily. Post-translationally, autophosphorylated. Transiently phosphorylated on Thr-166 and Thr-289. This phosphorylation is gbpC-dependent.

It carries out the reaction L-seryl-[myosin light chain] + ATP = O-phospho-L-seryl-[myosin light chain] + ADP + H(+). The enzyme catalyses L-threonyl-[myosin light chain] + ATP = O-phospho-L-threonyl-[myosin light chain] + ADP + H(+). With respect to regulation, possesses an autoinhibitory domain. Autophosphorylation appears to increase the enzymatic activity. Activation is gbdC-dependent. Does not have a calmodulin-binding domain. Phosphorylates a specific serine in the N-terminus of a myosin light chain. Phosphorylates regulatory myosin light chain (mlcR) during chemotaxis. mlcR phosphorylation increases the motility and actin-activated ATPase activity of myosin, contributing to chemotaxis. The polypeptide is Myosin light chain kinase A (mlkA) (Dictyostelium discoideum (Social amoeba)).